The following is a 387-amino-acid chain: Probable serine/threonine-protein kinase PBL18 (387 aa).

Residues 1–37 (MGNCLDSSARVGNRESTFGGSSRISRKPNQSSRLSSL) form a disordered region. Gly2 carries N-myristoyl glycine lipidation. Cys4 is lipidated: S-palmitoyl cysteine. The span at 14-37 (RESTFGGSSRISRKPNQSSRLSSL) shows a compositional bias: polar residues. Thr73 is subject to Phosphothreonine. The region spanning 84–365 (FKPNSMIGEG…ADVLSTLQQL (282 aa)) is the Protein kinase domain. ATP contacts are provided by residues 90–98 (IGEGGFGCV) and Lys122. The residue at position 167 (Tyr167) is a Phosphotyrosine. Asp215 serves as the catalytic Proton acceptor. A Phosphoserine modification is found at Ser219. Phosphothreonine is present on residues Thr250 and Thr255. Tyr263 carries the post-translational modification Phosphotyrosine. Positions 368–387 (SSKKMGSTQNIVMSPSSHMS) are disordered.

It belongs to the protein kinase superfamily. Ser/Thr protein kinase family.

Its subcellular location is the cell membrane. It catalyses the reaction L-seryl-[protein] + ATP = O-phospho-L-seryl-[protein] + ADP + H(+). The enzyme catalyses L-threonyl-[protein] + ATP = O-phospho-L-threonyl-[protein] + ADP + H(+). May be involved in plant defense signaling. The chain is Probable serine/threonine-protein kinase PBL18 from Arabidopsis thaliana (Mouse-ear cress).